Consider the following 302-residue polypeptide: Epoxyqueuosine reductase (302 aa).

Catalysis depends on Asp-128, which acts as the Proton donor. The 4Fe-4S ferredoxin-type 1 domain occupies 170 to 202 (LPLQADGPIRDYCGTCTACIDACPTDAITPYEV). Positions 182, 185, 188, 192, 207, 234, 237, and 241 each coordinate [4Fe-4S] cluster. The region spanning 221–251 (NEFKGKMENWIFGCDICQDVCPWNSFARPHS) is the 4Fe-4S ferredoxin-type 2 domain.

The protein belongs to the QueG family. Monomer. It depends on cob(II)alamin as a cofactor. [4Fe-4S] cluster is required as a cofactor.

The protein resides in the cytoplasm. It carries out the reaction epoxyqueuosine(34) in tRNA + AH2 = queuosine(34) in tRNA + A + H2O. It functions in the pathway tRNA modification; tRNA-queuosine biosynthesis. Its function is as follows. Catalyzes the conversion of epoxyqueuosine (oQ) to queuosine (Q), which is a hypermodified base found in the wobble positions of tRNA(Asp), tRNA(Asn), tRNA(His) and tRNA(Tyr). In Leadbetterella byssophila (strain DSM 17132 / JCM 16389 / KACC 11308 / NBRC 106382 / 4M15), this protein is Epoxyqueuosine reductase.